The primary structure comprises 240 residues: Octanoyltransferase (240 aa).

Positions 31–216 constitute a BPL/LPL catalytic domain; the sequence is GQVGDTLLLL…HLCAVFDLEP (186 aa). Substrate contacts are provided by residues 76–83, 145–147, and 159–161; these read RGGGATYH, AIG, and GLA. The active-site Acyl-thioester intermediate is Cys177.

It belongs to the LipB family.

It is found in the cytoplasm. The catalysed reaction is octanoyl-[ACP] + L-lysyl-[protein] = N(6)-octanoyl-L-lysyl-[protein] + holo-[ACP] + H(+). It functions in the pathway protein modification; protein lipoylation via endogenous pathway; protein N(6)-(lipoyl)lysine from octanoyl-[acyl-carrier-protein]: step 1/2. Functionally, catalyzes the transfer of endogenously produced octanoic acid from octanoyl-acyl-carrier-protein onto the lipoyl domains of lipoate-dependent enzymes. Lipoyl-ACP can also act as a substrate although octanoyl-ACP is likely to be the physiological substrate. The polypeptide is Octanoyltransferase (Roseiflexus sp. (strain RS-1)).